A 245-amino-acid polypeptide reads, in one-letter code: Eukaryotic translation initiation factor 4E type 2 (245 aa).

Positions 1 to 38 (MNNKFDALKDDDSGDHDQNEENSTQKDGEKEKTERDKN) are enriched in basic and acidic residues. The tract at residues 1 to 52 (MNNKFDALKDDDSGDHDQNEENSTQKDGEKEKTERDKNQSSSKRKAVVPGPA) is disordered. Ser13 is modified (phosphoserine). The segment at 54-57 (HPLQ) is EIF4EBP1/2/3 binding. MRNA is bound at residue 78–79 (YE). The EIF4EBP1/2/3 binding stretch occupies residues 95–99 (WRFYS). Residues His110 and 124–125 (WE) contribute to the mRNA site. At Lys134 the chain carries N6-acetyllysine; alternate. Residue Lys134 forms a Glycyl lysine isopeptide (Lys-Gly) (interchain with G-Cter in ISG15); alternate linkage. Residues 150–157 (NLILAMLG) are EIF4EBP1/2/3 binding. MRNA is bound by residues 174–179 (RFQEDI) and 222–224 (KMP). Residue Lys222 forms a Glycyl lysine isopeptide (Lys-Gly) (interchain with G-Cter in ISG15) linkage.

This sequence belongs to the eukaryotic initiation factor 4E family. As to quaternary structure, interacts with EIF4EBP1, EIF4EBP2 and EIF4EBP3. Does not interact with eIF4G (EIF4G1, EIF4G2 or EIF4G3). Component of the 4EHP-GYF2 complex, at least composed of EIF4E2, GIGYF2 and ZNF598. Interacts with GIGYF2 (via the 4EHP-binding motif); the interaction is direct. Interacts with EIF4ENIF1/4E-T (via YXXXXLphi motif); increasing affinity for the 7-methylguanosine-containing mRNA cap. In terms of processing, ubiquitinated by ARIH1. The consequences of ubiquitination are however unclear: according to a report, EIF4E2 ubiquitination leads to promote EIF4E2 cap-binding and protein translation arrest. According to another report ubiquitination leads to its subsequent degradation. Post-translationally, ISGylation enhances its cap structure-binding activity and translation-inhibition activity.

It is found in the cytoplasm. The protein resides in the P-body. Its function is as follows. Recognizes and binds the 7-methylguanosine-containing mRNA cap during an early step in the initiation. Acts as a repressor of translation initiation. In contrast to EIF4E, it is unable to bind eIF4G (EIF4G1, EIF4G2 or EIF4G3), suggesting that it acts by competing with EIF4E and block assembly of eIF4F at the cap. In P-bodies, component of a complex that promotes miRNA-mediated translational repression. Involved in virus-induced host response by mediating miRNA MIR34A-induced translational silencing which controls IFNB1 production by a negative feedback mechanism. Component of the 4EHP-GYF2 complex, a multiprotein complex that acts as a repressor of translation initiation. In association with GIGYF2, assists ribosome-associated quality control (RQC) by sequestering the mRNA cap, blocking ribosome initiation and decreasing the translational load on problematic messages. Part of a pathway that works in parallel to RQC-mediated degradation of the stalled nascent polypeptide. GIGYF2 and EIF4E2 work downstream and independently of ZNF598, which seems to work as a scaffold that can recruit them to faulty mRNA even if alternative recruitment mechanisms may exist. In terms of biological role, (Microbial infection) Upon SARS coronavirus-2/SARS-CoV-2 infection, the interaction with non-structural protein 2 (nsp2) with GIGYF2 enhances GIGYF2 binding to EIF4E2 and increases repression of translation initiation of genes involved in antiviral innate immune response such as IFNB1. The polypeptide is Eukaryotic translation initiation factor 4E type 2 (Homo sapiens (Human)).